The primary structure comprises 126 residues: Holo-[acyl-carrier-protein] synthase (126 aa).

Mg(2+) contacts are provided by D8 and E59.

Belongs to the P-Pant transferase superfamily. AcpS family. Requires Mg(2+) as cofactor.

The protein localises to the cytoplasm. It carries out the reaction apo-[ACP] + CoA = holo-[ACP] + adenosine 3',5'-bisphosphate + H(+). Transfers the 4'-phosphopantetheine moiety from coenzyme A to a Ser of acyl-carrier-protein. This is Holo-[acyl-carrier-protein] synthase from Rickettsia prowazekii (strain Madrid E).